A 271-amino-acid polypeptide reads, in one-letter code: Membrane protein insertase YidC 1 (271 aa).

The N-terminal stretch at 1 to 20 is a signal peptide; it reads MKKKLKTFSLILLTGSLLVA. The N-palmitoyl cysteine moiety is linked to residue cysteine 21. Residue cysteine 21 is the site of S-diacylglycerol cysteine attachment. Helical transmembrane passes span 45 to 65, 124 to 144, 163 to 183, and 201 to 221; these read IQWL…TLII, YASV…FQAL, PDPY…STWL, and VMPF…VLYW.

It belongs to the OXA1/ALB3/YidC family. Type 2 subfamily.

It localises to the cell membrane. Required for the insertion and/or proper folding and/or complex formation of integral membrane proteins into the membrane. Involved in integration of membrane proteins that insert both dependently and independently of the Sec translocase complex, as well as at least some lipoproteins. The polypeptide is Membrane protein insertase YidC 1 (Streptococcus agalactiae serotype III (strain NEM316)).